The chain runs to 101 residues: Putative pterin-4-alpha-carbinolamine dehydratase (101 aa).

The protein belongs to the pterin-4-alpha-carbinolamine dehydratase family.

The catalysed reaction is (4aS,6R)-4a-hydroxy-L-erythro-5,6,7,8-tetrahydrobiopterin = (6R)-L-erythro-6,7-dihydrobiopterin + H2O. The chain is Putative pterin-4-alpha-carbinolamine dehydratase from Ralstonia pickettii (strain 12J).